The chain runs to 95 residues: Glutaredoxin 1 (95 aa).

Positions 1–95 constitute a Glutaredoxin domain; the sequence is MNKSILHTII…DKLLEHQPKN (95 aa). Residues cysteine 17 and cysteine 20 are joined by a disulfide bond.

The protein belongs to the glutaredoxin family. In terms of assembly, monomer.

Its subcellular location is the cytoplasm. Its function is as follows. Has a glutathione-disulfide oxidoreductase activity in the presence of NADPH and glutathione reductase. Reduces low molecular weight disulfides and proteins. The sequence is that of Glutaredoxin 1 (grxC1) from Rickettsia prowazekii (strain Madrid E).